Consider the following 255-residue polypeptide: Tabinhibitin 7 (255 aa).

Positions 1–23 are cleaved as a signal peptide; sequence MTSILVSSFLLATLVLQYATIDA. Positions 32–34 match the Cell attachment site motif; it reads RGD. The SCP domain occupies 67 to 211; the sequence is LSKINDVRDH…KARALLTCNF (145 aa).

Belongs to the CRISP family. As to expression, expressed in salivary glands.

The protein resides in the secreted. Functionally, inhibits platelet aggregation induced by all agonists tested (ADP, arachidonic acid, the thromboxane A2 analog U46619, thrombin, and snake venom snaclecs (TMVA that activates platelet through GPIB, and stejnulxin that specifically acts through GPVI (GP6))). May act by competing with fibrinogen for binding to glycoprotein IIb/IIIa (ITGA2B/ITGB3). The sequence is that of Tabinhibitin 7 from Tabanus yao (Horsefly).